We begin with the raw amino-acid sequence, 664 residues long: Tripartite terminase subunit 1 (664 aa).

Residues 205-233 form a C3H1-type zinc finger; that stretch reads CHVCFEELCVTANQGATASRRLAGKICDH. Disordered stretches follow at residues 273–295 and 440–466; these read SKMTEANSGGPAEAPGPAAAQER and HAAEDPPGDGNAEKEARRAPSLGGGPE. Positions 281–292 are enriched in low complexity; sequence GGPAEAPGPAAA.

This sequence belongs to the herpesviridae TRM1 protein family. As to quaternary structure, associates with TRM2 and TRM3 to form the tripartite terminase complex. Interacts with portal protein.

It is found in the host nucleus. Component of the molecular motor that translocates viral genomic DNA in empty capsid during DNA packaging. Forms a tripartite terminase complex together with TRM2 and TRM3 in the host cytoplasm. Once the complex reaches the host nucleus, it interacts with the capsid portal vertex. This portal forms a ring in which genomic DNA is translocated into the capsid. TRM1 carries an endonuclease activity that plays an important role for the cleavage of concatemeric viral DNA into unit length genomes. This Bos taurus (Bovine) protein is Tripartite terminase subunit 1.